Consider the following 812-residue polypeptide: 1,4-alpha-glucan branching enzyme GlgB (812 aa).

Polar residues predominate over residues Met-1–Ala-11. The segment at Met-1 to Val-83 is disordered. Over residues Ser-49–Val-64 the composition is skewed to low complexity. Residues Pro-65–Val-83 are compositionally biased toward pro residues. Asp-490 acts as the Nucleophile in catalysis. Catalysis depends on Glu-543, which acts as the Proton donor.

Belongs to the glycosyl hydrolase 13 family. GlgB subfamily. Monomer.

The catalysed reaction is Transfers a segment of a (1-&gt;4)-alpha-D-glucan chain to a primary hydroxy group in a similar glucan chain.. The protein operates within glycan biosynthesis; glycogen biosynthesis. Functionally, catalyzes the formation of the alpha-1,6-glucosidic linkages in glycogen by scission of a 1,4-alpha-linked oligosaccharide from growing alpha-1,4-glucan chains and the subsequent attachment of the oligosaccharide to the alpha-1,6 position. This Frankia casuarinae (strain DSM 45818 / CECT 9043 / HFP020203 / CcI3) protein is 1,4-alpha-glucan branching enzyme GlgB.